We begin with the raw amino-acid sequence, 430 residues long: MNIAVVGLSHKTAPVEVREKLSIQEAKIEEALTHLKGYPHIEEVAVISTCNRLEIYAVVTDTEKGVVEITQFLSEIGHIPLSYLRRYLFTLLHQDAVRHLLRVAAGLESLVLGEGQILAQVKTTHKLSQKYKGIGRLLDRLFKQAITAGKRVRSETNIGTGAVSISSAAVELAITKVDDLATRNISIIGAGKMACLLVKHLVAKGATSITIVNRSQRRAEELAKKFPQAELTLVSLDEMMSVVGKSHLVFTSTGATEPILHQDNLREVVSAEQGLMLFDISVPRNVATNVQDLEIVEAYNVDDLKAVVAQNHASRRQMALEAEGLLEEEVEAFELWWRSLETVPTISCLRTKVESIREQELEKALSRLGTEFAEKHQEVIEALTRGIVNKILHEPMVQLRAQQDIEARQRCLQSLQMLFDLEIEIEKQFS.

Substrate-binding positions include 49-52 (TCNR), Ser-109, 114-116 (EGQ), and Gln-120. Cys-50 acts as the Nucleophile in catalysis. 189–194 (GAGKMA) provides a ligand contact to NADP(+).

This sequence belongs to the glutamyl-tRNA reductase family. As to quaternary structure, homodimer.

The enzyme catalyses (S)-4-amino-5-oxopentanoate + tRNA(Glu) + NADP(+) = L-glutamyl-tRNA(Glu) + NADPH + H(+). It functions in the pathway porphyrin-containing compound metabolism; protoporphyrin-IX biosynthesis; 5-aminolevulinate from L-glutamyl-tRNA(Glu): step 1/2. The protein operates within porphyrin-containing compound metabolism; chlorophyll biosynthesis. Catalyzes the NADPH-dependent reduction of glutamyl-tRNA(Glu) to glutamate 1-semialdehyde (GSA). In Crocosphaera subtropica (strain ATCC 51142 / BH68) (Cyanothece sp. (strain ATCC 51142)), this protein is Glutamyl-tRNA reductase.